Here is a 355-residue protein sequence, read N- to C-terminus: Putative inositol monophosphatase 3 (355 aa).

A helical membrane pass occupies residues 16–36 (VPATIFAILLTIVLVYFLNFH). Positions 127, 167, 169, 170, and 292 each coordinate Mg(2+). Residue Glu127 coordinates substrate. Residues 169–172 (LDAT) and Asp292 contribute to the substrate site.

The protein belongs to the inositol monophosphatase superfamily. Requires Mg(2+) as cofactor.

The protein localises to the membrane. It carries out the reaction a myo-inositol phosphate + H2O = myo-inositol + phosphate. Its pathway is polyol metabolism; myo-inositol biosynthesis; myo-inositol from D-glucose 6-phosphate: step 2/2. This Drosophila pseudoobscura pseudoobscura (Fruit fly) protein is Putative inositol monophosphatase 3.